We begin with the raw amino-acid sequence, 63 residues long: MKAQELRTKNVEELKAELINLLGEQFKLRMQAATGQLQQTHQLKQVRRSIAQVKTVLNQKAGE.

Belongs to the universal ribosomal protein uL29 family.

This is Large ribosomal subunit protein uL29 from Haemophilus ducreyi (strain 35000HP / ATCC 700724).